The primary structure comprises 350 residues: Small ribosomal subunit biogenesis GTPase RsgA (350 aa).

Residues 1–30 (MSKRKLTQNQQRRIQSNNAKTLHRHQHRHK) are disordered. Polar residues predominate over residues 7–20 (TQNQQRRIQSNNAK). Residues 21-30 (TLHRHQHRHK) show a composition bias toward basic residues. Residues 106 to 274 (HNQIVRPDYY…LIDSPGIREF (169 aa)) enclose the CP-type G domain. GTP-binding positions include 162–165 (NKAD) and 216–224 (GQSGVGKSS). Zn(2+) contacts are provided by Cys298, Cys303, His305, and Cys311.

This sequence belongs to the TRAFAC class YlqF/YawG GTPase family. RsgA subfamily. In terms of assembly, monomer. Associates with 30S ribosomal subunit, binds 16S rRNA. It depends on Zn(2+) as a cofactor.

It is found in the cytoplasm. One of several proteins that assist in the late maturation steps of the functional core of the 30S ribosomal subunit. Helps release RbfA from mature subunits. May play a role in the assembly of ribosomal proteins into the subunit. Circularly permuted GTPase that catalyzes slow GTP hydrolysis, GTPase activity is stimulated by the 30S ribosomal subunit. The polypeptide is Small ribosomal subunit biogenesis GTPase RsgA (Histophilus somni (strain 129Pt) (Haemophilus somnus)).